Here is a 68-residue protein sequence, read N- to C-terminus: DNA-directed RNA polymerase subunit Rpo10 (68 aa).

Cysteine 7, cysteine 10, cysteine 44, and cysteine 45 together coordinate Zn(2+).

It belongs to the archaeal Rpo10/eukaryotic RPB10 RNA polymerase subunit family. Part of the RNA polymerase complex. Zn(2+) is required as a cofactor.

Its subcellular location is the cytoplasm. It catalyses the reaction RNA(n) + a ribonucleoside 5'-triphosphate = RNA(n+1) + diphosphate. DNA-dependent RNA polymerase (RNAP) catalyzes the transcription of DNA into RNA using the four ribonucleoside triphosphates as substrates. This Methanococcus vannielii (strain ATCC 35089 / DSM 1224 / JCM 13029 / OCM 148 / SB) protein is DNA-directed RNA polymerase subunit Rpo10.